A 184-amino-acid polypeptide reads, in one-letter code: SsrA-binding protein (184 aa).

Polar residues predominate over residues 1-11 (MAAKKSTPTDS). Residues 1 to 31 (MAAKKSTPTDSGKSKGKKNKAQKGAGQKGAG) form a disordered region.

Belongs to the SmpB family.

The protein localises to the cytoplasm. Its function is as follows. Required for rescue of stalled ribosomes mediated by trans-translation. Binds to transfer-messenger RNA (tmRNA), required for stable association of tmRNA with ribosomes. tmRNA and SmpB together mimic tRNA shape, replacing the anticodon stem-loop with SmpB. tmRNA is encoded by the ssrA gene; the 2 termini fold to resemble tRNA(Ala) and it encodes a 'tag peptide', a short internal open reading frame. During trans-translation Ala-aminoacylated tmRNA acts like a tRNA, entering the A-site of stalled ribosomes, displacing the stalled mRNA. The ribosome then switches to translate the ORF on the tmRNA; the nascent peptide is terminated with the 'tag peptide' encoded by the tmRNA and targeted for degradation. The ribosome is freed to recommence translation, which seems to be the essential function of trans-translation. The protein is SsrA-binding protein of Corynebacterium jeikeium (strain K411).